The sequence spans 488 residues: Pre-glycoprotein polyprotein GP complex (488 aa).

G2 carries the N-myristoyl glycine; by host lipid modification. Topologically, residues 2 to 17 (GQLFSFFEEVPNIIHE) are extracellular. The helical transmembrane segment at 18–32 (AINIALIAVSLIAAL) threads the bilayer. A topological domain (cytoplasmic) is located at residue K33. Residues 34-53 (GMINLWKSGLFQLIFFLTLA) form a helical membrane-spanning segment. Extracellular loops occupy residues 54-58 (GRSCS) and 59-427 (FRIG…TLVD). C57 serves as a coordination point for Zn(2+). N-linked (GlcNAc...) asparagine; by host glycosylation is found at N69, N88, N99, N125, N171, N178, and N222. 4 disulfides stabilise this stretch: C85–C229, C274–C287, C296–C305, and C359–C380. N360, N368, N385, and N390 each carry an N-linked (GlcNAc...) asparagine; by host glycan. Residues 428 to 448 (ICFWSTLFFTTTLFLHLVGFP) form a helical membrane-spanning segment. The Cytoplasmic segment spans residues 449–488 (THRHIRGEPCPLPHRLNSRGGCRCGKYPELKKPITWHKNH). Positions 450, 452, 458, 462, 470, 472, and 488 each coordinate Zn(2+).

This sequence belongs to the arenaviridae GPC protein family. In terms of assembly, homotetramer; disulfide-linked. As to quaternary structure, homotetramer. GP2 homotetramers bind through ionic interactions with GP1 homotetramers to form the GP complex together with the stable signal peptide. The GP-C polyprotein interacts with the host protease MBTPS1/SKI-1 resulting in the polyprotein processing. In terms of processing, specific enzymatic cleavages in vivo yield mature proteins. GP-C polyprotein is cleaved in the endoplasmic reticulum by the host protease MBTPS1. Only cleaved glycoprotein is incorporated into virions. Post-translationally, the SSP remains stably associated with the GP complex following cleavage by signal peptidase and plays crucial roles in the trafficking of GP through the secretory pathway. Myristoylation is necessary for GP2-mediated fusion activity.

The protein resides in the virion membrane. It localises to the host endoplasmic reticulum membrane. Its subcellular location is the host Golgi apparatus membrane. The protein localises to the host cell membrane. Functionally, interacts with the host receptor. Mediates virus attachment to host TFRC. This attachment induces virion internalization predominantly through clathrin-mediated endocytosis. Class I viral fusion protein that directs fusion of viral and host endosomal membranes, leading to delivery of the nucleocapsid into the cytoplasm. Membrane fusion is mediated by irreversible conformational changes induced upon acidification in the endosome. Its function is as follows. Stable signal peptide (SSP): cleaved and functions as a signal peptide. In addition, it is also retained as the third component of the GP complex. The SSP is required for efficient glycoprotein expression, post-translational maturation cleavage of GP1 and GP2, glycoprotein transport to the cell surface plasma membrane, formation of infectious virus particles, and acid pH-dependent glycoprotein-mediated cell fusion. The sequence is that of Pre-glycoprotein polyprotein GP complex from Homo sapiens (Human).